We begin with the raw amino-acid sequence, 305 residues long: Olfactory receptor 4B13 (305 aa).

Residues 1–25 (MANKNNVTELIFTGLFQDPEVQKVC) are Extracellular-facing. N-linked (GlcNAc...) asparagine glycosylation is present at asparagine 6. Residues 26–46 (FVLFLPVYLATLLGNSLILVA) traverse the membrane as a helical segment. Residues 47–55 (VSISKTLHS) are Cytoplasmic-facing. Residues 56–76 (PMYFFLSSLSLVEICYSSTIV) traverse the membrane as a helical segment. Residues 77–95 (PKFITDLLAKVKTISLKGC) are Extracellular-facing. Cysteine 95 and cysteine 187 form a disulfide bridge. The chain crosses the membrane as a helical span at residues 96-116 (LTQIFFSHFFGVVEVILLVVM). At 117–141 (AYDRYVAICKPLHYMNIMSRQVCHM) the chain is on the cytoplasmic side. The chain crosses the membrane as a helical span at residues 142–162 (LVAGSWLGGFIHSIIQIIITI). Topologically, residues 163–202 (PLPFCGPNVIDHYFCDLQQLFKLACTDTFMEGFIVMANSG) are extracellular. A helical transmembrane segment spans residues 203–223 (LISIVSLFILVSSYAVILISL). At 224-236 (RKRSAEGRRKALS) the chain is on the cytoplasmic side. A helical membrane pass occupies residues 237 to 257 (TCASHITVVILFFVPGAFIYM). The Extracellular portion of the chain corresponds to 258-266 (RPSSTFTED). Residues 267–287 (KLVSVFYTVITPMLNPIVYTL) form a helical membrane-spanning segment. Residues 288 to 305 (RNTEMKNAIRMSWKQKDS) are Cytoplasmic-facing.

This sequence belongs to the G-protein coupled receptor 1 family.

It localises to the cell membrane. Odorant receptor. The polypeptide is Olfactory receptor 4B13 (Mus musculus (Mouse)).